Reading from the N-terminus, the 177-residue chain is ADP-ribosylation factor-like protein 3 (177 aa).

Residue Gly2 is the site of N-myristoyl glycine attachment. GTP is bound by residues 23–31, 125–128, and Ala159; these read GLDNAGKTT and NKQD.

This sequence belongs to the small GTPase superfamily. Arf family.

Its subcellular location is the golgi apparatus membrane. It localises to the cytoplasm. It is found in the cytoskeleton. The protein localises to the spindle. The protein resides in the nucleus. Its subcellular location is the microtubule organizing center. Small GTP-binding protein which cycles between an inactive GDP-bound and an active GTP-bound form, and the rate of cycling is regulated by guanine nucleotide exchange factors (GEF) and GTPase-activating proteins (GAP). Required for normal cytokinesis and cilia signaling. Required for targeting proteins to the ciliary membrane by releasing myristoylated protein from unc119 cargo adapters into the cilium. This Chlamydomonas reinhardtii (Chlamydomonas smithii) protein is ADP-ribosylation factor-like protein 3.